Reading from the N-terminus, the 776-residue chain is DNA ligase (776 aa).

NAD(+)-binding positions include 31–35, 80–81, and Glu-112; these read DAEYD and SL. The active-site N6-AMP-lysine intermediate is Lys-114. Residues Arg-135, Glu-172, Lys-288, and Lys-312 each coordinate NAD(+). Zn(2+) contacts are provided by Cys-406, Cys-409, Cys-436, and Cys-442. The BRCT domain occupies 693–776; it reads AEGLPLAGQT…TFLAEQGIAV (84 aa).

Belongs to the NAD-dependent DNA ligase family. LigA subfamily. Requires Mg(2+) as cofactor. The cofactor is Mn(2+).

The catalysed reaction is NAD(+) + (deoxyribonucleotide)n-3'-hydroxyl + 5'-phospho-(deoxyribonucleotide)m = (deoxyribonucleotide)n+m + AMP + beta-nicotinamide D-nucleotide.. Its function is as follows. DNA ligase that catalyzes the formation of phosphodiester linkages between 5'-phosphoryl and 3'-hydroxyl groups in double-stranded DNA using NAD as a coenzyme and as the energy source for the reaction. It is essential for DNA replication and repair of damaged DNA. The chain is DNA ligase from Pseudomonas putida (strain ATCC 47054 / DSM 6125 / CFBP 8728 / NCIMB 11950 / KT2440).